The chain runs to 89 residues: UPF0213 protein LMOf2365_0181 (89 aa).

The 76-residue stretch at 5 to 80 (SEHFFYVLKC…KKLSRKNKDA (76 aa)) folds into the GIY-YIG domain.

The protein belongs to the UPF0213 family.

The polypeptide is UPF0213 protein LMOf2365_0181 (Listeria monocytogenes serotype 4b (strain F2365)).